The chain runs to 709 residues: Polyribonucleotide nucleotidyltransferase (709 aa).

2 residues coordinate Mg(2+): aspartate 489 and aspartate 495. Residues 556–615 (PKIDMIKIDVDKIKVVIGKGGETIDKIIAETGVKIDIDEEGNVSIFSSDQAAIDRTKDII) form the KH domain. An S1 motif domain is found at 625–693 (GEVYHAKVVR…DKGRVDASMK (69 aa)).

Belongs to the polyribonucleotide nucleotidyltransferase family. Mg(2+) serves as cofactor.

Its subcellular location is the cytoplasm. It carries out the reaction RNA(n+1) + phosphate = RNA(n) + a ribonucleoside 5'-diphosphate. Its function is as follows. Involved in mRNA degradation. Catalyzes the phosphorolysis of single-stranded polyribonucleotides processively in the 3'- to 5'-direction. The protein is Polyribonucleotide nucleotidyltransferase of Streptococcus agalactiae serotype V (strain ATCC BAA-611 / 2603 V/R).